A 776-amino-acid polypeptide reads, in one-letter code: Lysyl oxidase homolog 2 (776 aa).

The signal sequence occupies residues 1–25 (MELHFGSCLSGCLALLVLLPSLSLA). SRCR domains follow at residues 61–162 (VRLA…VVCS), 191–305 (IRPI…VSCV), 329–428 (VRLR…VRCN), and 438–546 (VRLN…VACS). Disulfide bonds link cysteine 87–cysteine 151, cysteine 100–cysteine 161, cysteine 131–cysteine 141, cysteine 221–cysteine 294, cysteine 234–cysteine 304, cysteine 268–cysteine 278, cysteine 354–cysteine 417, cysteine 367–cysteine 427, and cysteine 398–cysteine 408. An N-linked (GlcNAc...) asparagine glycan is attached at asparagine 267. Asparagine 291 is a glycosylation site (N-linked (GlcNAc...) asparagine). N-linked (GlcNAc...) asparagine glycosylation is present at asparagine 458. Disulfide bonds link cysteine 467/cysteine 532, cysteine 480/cysteine 545, and cysteine 514/cysteine 524. A lysyl-oxidase like region spans residues 550–753 (PDLVLNAEIV…WMYNCHVGGA (204 aa)). Ca(2+) is bound by residues aspartate 551 and leucine 552. Cystine bridges form between cysteine 575–cysteine 627, cysteine 581–cysteine 697, cysteine 659–cysteine 675, and cysteine 665–cysteine 687. Cu cation is bound by residues histidine 628, histidine 630, and histidine 632. N-linked (GlcNAc...) asparagine glycosylation is present at asparagine 646. Positions 655 to 691 (KASFCLEDTECEGDIQKSYECANFGEQGITMGCWDMY) form a cross-link, lysine tyrosylquinone (Lys-Tyr). Position 691 is a 2',4',5'-topaquinone (tyrosine 691). The Ca(2+) site is built by glutamate 724, aspartate 726, asparagine 729, and asparagine 730. Cysteine 734 and cysteine 748 are disulfide-bonded.

It belongs to the lysyl oxidase family. In terms of assembly, component of some chromatin repressor complex. Interacts with SNAI1. Interacts with TAF10. Interacts with HSPA5. Interacts with EFEMP2. Cu cation is required as a cofactor. Lysine tyrosylquinone residue serves as cofactor. Post-translationally, the lysine tyrosylquinone cross-link (LTQ) is generated by condensation of the epsilon-amino group of a lysine with a topaquinone produced by oxidation of tyrosine. In terms of processing, N-glycosylated. N-glycosylation on Asn-458 and Asn-646 may be essential for proper folding and secretion; may be composed of a fucosylated carbohydrates attached to a trimannose N-linked glycan core. As to expression, ubiquitous. Highest expression in skin, lung and thymus. Present in chondrocytes: mainly expressed by chondrocytes in healing fractures and in epiphyseal growth plates (at protein level).

The protein resides in the secreted. It localises to the extracellular space. Its subcellular location is the extracellular matrix. The protein localises to the basement membrane. It is found in the nucleus. The protein resides in the chromosome. It localises to the endoplasmic reticulum. The enzyme catalyses L-lysyl-[protein] + O2 + H2O = (S)-2-amino-6-oxohexanoyl-[protein] + H2O2 + NH4(+). With respect to regulation, specifically inhibited by a mouse monoclonal antibody AB0023, inhibition occurs in a non-competitive manner. Mediates the post-translational oxidative deamination of lysine residues on target proteins leading to the formation of deaminated lysine (allysine). Acts as a transcription corepressor and specifically mediates deamination of trimethylated 'Lys-4' of histone H3 (H3K4me3), a specific tag for epigenetic transcriptional activation. Shows no activity against histone H3 when it is trimethylated on 'Lys-9' (H3K9me3) or 'Lys-27' (H3K27me3) or when 'Lys-4' is monomethylated (H3K4me1) or dimethylated (H3K4me2). Also mediates deamination of methylated TAF10, a member of the transcription factor IID (TFIID) complex, which induces release of TAF10 from promoters, leading to inhibition of TFIID-dependent transcription. LOXL2-mediated deamination of TAF10 results in transcriptional repression of genes required for embryonic stem cell pluripotency including POU5F1/OCT4, NANOG, KLF4 and SOX2. Involved in epithelial to mesenchymal transition (EMT) via interaction with SNAI1 and participates in repression of E-cadherin, probably by mediating deamination of histone H3. During EMT, involved with SNAI1 in negatively regulating pericentromeric heterochromatin transcription. SNAI1 recruits LOXL2 to pericentromeric regions to oxidize histone H3 and repress transcription which leads to release of heterochromatin component CBX5/HP1A, enabling chromatin reorganization and acquisition of mesenchymal traits. Interacts with the endoplasmic reticulum protein HSPA5 which activates the IRE1-XBP1 pathway of the unfolded protein response, leading to expression of several transcription factors involved in EMT and subsequent EMT induction. When secreted into the extracellular matrix, promotes cross-linking of extracellular matrix proteins by mediating oxidative deamination of peptidyl lysine residues in precursors to fibrous collagen and elastin. Acts as a regulator of sprouting angiogenesis, probably via collagen IV scaffolding. Acts as a regulator of chondrocyte differentiation, probably by regulating expression of factors that control chondrocyte differentiation. The sequence is that of Lysyl oxidase homolog 2 (Loxl2) from Mus musculus (Mouse).